A 56-amino-acid chain; its full sequence is Large ribosomal subunit protein bL32 (56 aa).

Residues 1-26 (MAVQQNKKSRSKRGMRRSHDALSTAQ) are disordered. Residues 7 to 16 (KKSRSKRGMR) are compositionally biased toward basic residues.

Belongs to the bacterial ribosomal protein bL32 family.

This Shewanella baltica (strain OS155 / ATCC BAA-1091) protein is Large ribosomal subunit protein bL32.